Here is an 84-residue protein sequence, read N- to C-terminus: Large ribosomal subunit protein bL27 (84 aa).

Residues 1–20 (MAHKKSGGASRNGRDSNPKY) form a disordered region.

The protein belongs to the bacterial ribosomal protein bL27 family.

In Dictyoglomus thermophilum (strain ATCC 35947 / DSM 3960 / H-6-12), this protein is Large ribosomal subunit protein bL27.